A 370-amino-acid polypeptide reads, in one-letter code: 3 beta-hydroxysteroid dehydrogenase/Delta 5--&gt;4-isomerase (370 aa).

Catalysis depends on Y158, which acts as the Proton acceptor. Position 162 (K162) interacts with NAD(+).

It belongs to the 3-beta-HSD family. As to quaternary structure, monomer.

Its subcellular location is the cytoplasm. It carries out the reaction a 3beta-hydroxy-Delta(5)-steroid + NAD(+) = a 3-oxo-Delta(5)-steroid + NADH + H(+). The enzyme catalyses cholesterol + NAD(+) = cholest-5-en-3-one + NADH + H(+). The catalysed reaction is pregnenolone + NAD(+) = pregn-5-ene-3,20-dione + NADH + H(+). It catalyses the reaction 3beta-hydroxyandrost-5-en-17-one + NAD(+) = androst-5-ene-3,17-dione + NADH + H(+). It carries out the reaction a 3-oxo-Delta(5)-steroid = a 3-oxo-Delta(4)-steroid. The enzyme catalyses cholest-5-en-3-one = cholest-4-en-3-one. The catalysed reaction is pregn-5-ene-3,20-dione = progesterone. It catalyses the reaction androst-5-ene-3,17-dione = androst-4-ene-3,17-dione. The protein operates within lipid metabolism; steroid biosynthesis. 3-beta-HSD is a bifunctional enzyme, that catalyzes the oxidation and isomerization of cholesterol, pregnenolone, and dehydroepiandrosterone (DHEA) into cholest-4-en-3-one, progesterone, and androsterone, respectively. This Mycobacterium tuberculosis (strain CDC 1551 / Oshkosh) protein is 3 beta-hydroxysteroid dehydrogenase/Delta 5--&gt;4-isomerase.